A 303-amino-acid chain; its full sequence is Aspartate carbamoyltransferase catalytic subunit (303 aa).

Carbamoyl phosphate contacts are provided by Arg49 and Thr50. Position 77 (Lys77) interacts with L-aspartate. Carbamoyl phosphate is bound by residues Arg99, His126, and Gln129. L-aspartate is bound by residues Arg159 and Arg211. Carbamoyl phosphate is bound by residues Ser252 and Pro253.

The protein belongs to the aspartate/ornithine carbamoyltransferase superfamily. ATCase family. In terms of assembly, heterododecamer (2C3:3R2) of six catalytic PyrB chains organized as two trimers (C3), and six regulatory PyrI chains organized as three dimers (R2).

It carries out the reaction carbamoyl phosphate + L-aspartate = N-carbamoyl-L-aspartate + phosphate + H(+). The protein operates within pyrimidine metabolism; UMP biosynthesis via de novo pathway; (S)-dihydroorotate from bicarbonate: step 2/3. Its function is as follows. Catalyzes the condensation of carbamoyl phosphate and aspartate to form carbamoyl aspartate and inorganic phosphate, the committed step in the de novo pyrimidine nucleotide biosynthesis pathway. The chain is Aspartate carbamoyltransferase catalytic subunit from Listeria innocua serovar 6a (strain ATCC BAA-680 / CLIP 11262).